Reading from the N-terminus, the 213-residue chain is Protein nullo (213 aa).

In terms of tissue distribution, blastoderm. Throughout the entire cortex of the embryo although the distribution is not uniform.

Actin-myosin network stability during cellularization. Might be involved in increasing actin-actin interactions or membrane-to-cytoskeleton attachments. nullo together with Sry-a and bnk may provide auxiliary functions, by acting both to stabilize a large and dynamic microfilament structure and regulate its functions. This Drosophila melanogaster (Fruit fly) protein is Protein nullo (nullo).